The chain runs to 343 residues: Heat-inducible transcription repressor HrcA (343 aa).

The protein belongs to the HrcA family.

In terms of biological role, negative regulator of class I heat shock genes (grpE-dnaK-dnaJ and groELS operons). Prevents heat-shock induction of these operons. In Lysinibacillus sphaericus (Bacillus sphaericus), this protein is Heat-inducible transcription repressor HrcA.